We begin with the raw amino-acid sequence, 588 residues long: ATP-dependent lipid A-core flippase (588 aa).

Transmembrane regions (helical) follow at residues 23-43 (FWPVLLLGVLANILYSGIDAG), 56-76 (FITIDLNFVKQIPLIVLIGIT), 141-161 (DALTDFIQNICLVIGLLTVMM), 162-182 (VICWQLSLMFLLTIPFVGIIV), 257-277 (LVIAIGIATIIMAAIHLSTVI), and 278-298 (TISAGSFLAIIAAMLQLIKPM). The ABC transmembrane type-1 domain occupies 28–310 (LLGVLANILY…LTTLNATIQR (283 aa)). Residues 342–576 (IEFKHVYHAY…DGHYAQLYKV (235 aa)) enclose the ABC transporter domain. 375 to 382 (GHSGSGKT) serves as a coordination point for ATP.

The protein belongs to the ABC transporter superfamily. Lipid exporter (TC 3.A.1.106) family. As to quaternary structure, homodimer.

It localises to the cell inner membrane. It carries out the reaction ATP + H2O + lipid A-core oligosaccharideSide 1 = ADP + phosphate + lipid A-core oligosaccharideSide 2.. Involved in lipopolysaccharide (LPS) biosynthesis. Translocates lipid A-core from the inner to the outer leaflet of the inner membrane. Transmembrane domains (TMD) form a pore in the inner membrane and the ATP-binding domain (NBD) is responsible for energy generation. The protein is ATP-dependent lipid A-core flippase of Legionella pneumophila subsp. pneumophila (strain Philadelphia 1 / ATCC 33152 / DSM 7513).